The primary structure comprises 476 residues: Bifunctional protein HldE (476 aa).

The interval 1–320 (MQNPHIPSFA…RAVHQEGGSG (320 aa)) is ribokinase. 196–199 (NLSE) provides a ligand contact to ATP. The active site involves Asp265. The interval 345–476 (FTNGCFDIIH…KIVERIREKD (132 aa)) is cytidylyltransferase.

The protein in the N-terminal section; belongs to the carbohydrate kinase PfkB family. In the C-terminal section; belongs to the cytidylyltransferase family. In terms of assembly, homodimer.

It carries out the reaction D-glycero-beta-D-manno-heptose 7-phosphate + ATP = D-glycero-beta-D-manno-heptose 1,7-bisphosphate + ADP + H(+). It catalyses the reaction D-glycero-beta-D-manno-heptose 1-phosphate + ATP + H(+) = ADP-D-glycero-beta-D-manno-heptose + diphosphate. The protein operates within nucleotide-sugar biosynthesis; ADP-L-glycero-beta-D-manno-heptose biosynthesis; ADP-L-glycero-beta-D-manno-heptose from D-glycero-beta-D-manno-heptose 7-phosphate: step 1/4. It participates in nucleotide-sugar biosynthesis; ADP-L-glycero-beta-D-manno-heptose biosynthesis; ADP-L-glycero-beta-D-manno-heptose from D-glycero-beta-D-manno-heptose 7-phosphate: step 3/4. In terms of biological role, catalyzes the phosphorylation of D-glycero-D-manno-heptose 7-phosphate at the C-1 position to selectively form D-glycero-beta-D-manno-heptose-1,7-bisphosphate. Catalyzes the ADP transfer from ATP to D-glycero-beta-D-manno-heptose 1-phosphate, yielding ADP-D-glycero-beta-D-manno-heptose. The protein is Bifunctional protein HldE of Alcanivorax borkumensis (strain ATCC 700651 / DSM 11573 / NCIMB 13689 / SK2).